The chain runs to 260 residues: Glutamate racemase (260 aa).

Residues 14-15 and 46-47 each bind substrate; these read DS and YG. Catalysis depends on Cys-77, which acts as the Proton donor/acceptor. A substrate-binding site is contributed by 78–79; that stretch reads NT. Cys-188 functions as the Proton donor/acceptor in the catalytic mechanism. 189 to 190 contributes to the substrate binding site; it reads TH.

The protein belongs to the aspartate/glutamate racemases family.

The catalysed reaction is L-glutamate = D-glutamate. The protein operates within cell wall biogenesis; peptidoglycan biosynthesis. In terms of biological role, provides the (R)-glutamate required for cell wall biosynthesis. This is Glutamate racemase from Clostridium perfringens (strain ATCC 13124 / DSM 756 / JCM 1290 / NCIMB 6125 / NCTC 8237 / Type A).